The chain runs to 297 residues: tRNA dimethylallyltransferase (297 aa).

Residue 10–17 (APTGAGKT) participates in ATP binding. 12-17 (TGAGKT) is a binding site for substrate. Residues 34-37 (DSRQ) form an interaction with substrate tRNA region.

Belongs to the IPP transferase family. As to quaternary structure, monomer. Requires Mg(2+) as cofactor.

It carries out the reaction adenosine(37) in tRNA + dimethylallyl diphosphate = N(6)-dimethylallyladenosine(37) in tRNA + diphosphate. Catalyzes the transfer of a dimethylallyl group onto the adenine at position 37 in tRNAs that read codons beginning with uridine, leading to the formation of N6-(dimethylallyl)adenosine (i(6)A). The chain is tRNA dimethylallyltransferase from Leptospira interrogans serogroup Icterohaemorrhagiae serovar Lai (strain 56601).